A 138-amino-acid chain; its full sequence is MAQQKVIKYTVEHNRKDGVSEEDFIEWFTNTLIPQMVPVMQKNNILKYAVHKTDHQISTAFQSQVDKVRPGWVVSKCDLILEHWVNDLGDIMKLSQDPEWAAALKDQDVWMDNSKSNIHIGYDTIYIEDGTITNVPRK.

An EthD domain is found at 18 to 113 (GVSEEDFIEW…LKDQDVWMDN (96 aa)).

This sequence belongs to the tpcK family.

It functions in the pathway secondary metabolite biosynthesis. Functionally, dehydratase; part of the gene cluster that mediates the biosynthesis of iso-A82775C, a enylepoxycyclohexane and biosynthetic precursor of the chloropestolide anticancer natural products. Within the cluster, the prenyltransferase iacE prenylates siccayne to generate pestalodiol E, using dimethylallyl diphosphate (DMAPP) as cosubstrate. The probable oxidoreductase iacF is then involved in the epoxidation of pestalodiol F to pestalodiol F, which is further converted to pestalofone A by the short-chain dehydrogenase/reductase iacG. Iso-A82775C is subsequently generated from pestalofone A by the short-chain dehydrogenase/reductase iacC. Iso-A82775C is further condensed with maldoxin via a Diels-Alder reaction to produce the anticancer natural products chloropestolides A to E. The sequence is that of Dehydratase iacD from Pestalotiopsis fici (strain W106-1 / CGMCC3.15140).